The following is a 106-amino-acid chain: Phosphoribosyl-ATP pyrophosphatase (106 aa).

The protein belongs to the PRA-PH family.

Its subcellular location is the cytoplasm. The catalysed reaction is 1-(5-phospho-beta-D-ribosyl)-ATP + H2O = 1-(5-phospho-beta-D-ribosyl)-5'-AMP + diphosphate + H(+). The protein operates within amino-acid biosynthesis; L-histidine biosynthesis; L-histidine from 5-phospho-alpha-D-ribose 1-diphosphate: step 2/9. This Rhizorhabdus wittichii (strain DSM 6014 / CCUG 31198 / JCM 15750 / NBRC 105917 / EY 4224 / RW1) (Sphingomonas wittichii) protein is Phosphoribosyl-ATP pyrophosphatase.